The following is a 199-amino-acid chain: Probable adenine phosphoribosyltransferase (199 aa).

The protein belongs to the purine/pyrimidine phosphoribosyltransferase family. Homodimer.

The protein localises to the cytoplasm. The catalysed reaction is AMP + diphosphate = 5-phospho-alpha-D-ribose 1-diphosphate + adenine. It participates in purine metabolism; AMP biosynthesis via salvage pathway; AMP from adenine: step 1/1. Its function is as follows. Catalyzes a salvage reaction resulting in the formation of AMP, that is energically less costly than de novo synthesis. This Dictyostelium discoideum (Social amoeba) protein is Probable adenine phosphoribosyltransferase (aprt).